Here is a 275-residue protein sequence, read N- to C-terminus: Envelope glycoprotein (275 aa).

3 disulfide bridges follow: Cys1–Cys10, Cys18–Cys27, and Cys58–Cys62. N-linked (GlcNAc...) asparagine; by host glycosylation occurs at Asn122. 4 disulfide bridges follow: Cys164-Cys194, Cys187-Cys239, Cys204-Cys209, and Cys240-Cys245.

This sequence belongs to the hantavirus envelope glycoprotein family. In terms of assembly, homodimer. Homotetramer; forms heterotetrameric Gn-Gc spikes in the pre-fusion conformation. Homotrimer; forms homotrimer in the post-fusion conformation at acidic pH. Interacts (via C-terminus) with the nucleoprotein. Envelope polyprotein precursor is quickly cleaved in vivo just after synthesis, presumably by host signal peptidase.

Its subcellular location is the virion membrane. It localises to the host cell surface. The protein localises to the host Golgi apparatus membrane. It is found in the host endoplasmic reticulum membrane. Functionally, forms homotetramers with glycoprotein N at the surface of the virion. Attaches the virion to host cell receptors including integrin ITGAV/ITGB3. This attachment induces virion internalization predominantly through clathrin-dependent endocytosis. Class II fusion protein that promotes fusion of viral membrane with host endosomal membrane after endocytosis of the virion. The protein is Envelope glycoprotein (GP) of Homo sapiens (Human).